The chain runs to 482 residues: Isoxanthopterin deaminase (482 aa).

Zn(2+)-binding residues include His74 and His76. Substrate is bound at residue Gln79. His246 provides a ligand contact to Zn(2+). Positions 249 and 283 each coordinate substrate. Zn(2+)-binding residues include His283 and Asp334.

Belongs to the metallo-dependent hydrolases superfamily. ATZ/TRZ family. Zn(2+) is required as a cofactor.

The catalysed reaction is a 2-amino-4-hydroxypteridine + H2O + H(+) = a 2,4-dihydroxypteridine + NH4(+). This is Isoxanthopterin deaminase from Unknown prokaryotic organism.